Reading from the N-terminus, the 100-residue chain is Glyceraldehyde-3-phosphate dehydrogenase, testis-specific (100 aa).

Asp39 and Thr64 together coordinate NAD(+). Arg89 provides a ligand contact to D-glyceraldehyde 3-phosphate.

The protein belongs to the glyceraldehyde-3-phosphate dehydrogenase family. In terms of assembly, homotetramer.

It is found in the cytoplasm. The enzyme catalyses D-glyceraldehyde 3-phosphate + phosphate + NAD(+) = (2R)-3-phospho-glyceroyl phosphate + NADH + H(+). The protein operates within carbohydrate degradation; glycolysis; pyruvate from D-glyceraldehyde 3-phosphate: step 1/5. Functionally, may play an important role in regulating the switch between different pathways for energy production during spermiogenesis and in the spermatozoon. Required for sperm motility and male fertility. The sequence is that of Glyceraldehyde-3-phosphate dehydrogenase, testis-specific from Mesocricetus auratus (Golden hamster).